A 193-amino-acid polypeptide reads, in one-letter code: Ion-translocating oxidoreductase complex subunit A (193 aa).

A run of 6 helical transmembrane segments spans residues 5–25 (LMLF…FLGL), 39–59 (LGMG…AWLI), 62–82 (FILL…FIIA), 102–122 (LLGI…VALL), 134–154 (ALYG…FAAI), and 171–191 (SIAL…TGLV).

Belongs to the NqrDE/RnfAE family. The complex is composed of six subunits: RnfA, RnfB, RnfC, RnfD, RnfE and RnfG.

It localises to the cell inner membrane. Functionally, part of a membrane-bound complex that couples electron transfer with translocation of ions across the membrane. The sequence is that of Ion-translocating oxidoreductase complex subunit A from Sodalis glossinidius (strain morsitans).